The following is a 657-amino-acid chain: Bifunctional lysine-specific demethylase and histidyl-hydroxylase NO66 (657 aa).

2 disordered regions span residues 1-141 (MQKA…QTSP) and 165-198 (KSCP…NSNE). Positions 32-41 (SAKTVDTVTD) are enriched in polar residues. Residues 55 to 71 (AEKERRKYLQARVRAEG) are compositionally biased toward basic and acidic residues. Polar residues-rich tracts occupy residues 73-84 (SASTSSKSNATR) and 132-141 (RSQGLEQTSP). S133 carries the phosphoserine modification. Position 139 is a phosphothreonine (T139). Position 140 is a phosphoserine (S140). The JmjC domain maps to 315-454 (NPSTYLLGLR…NLLETLMPIV (140 aa)). H355, D357, and H420 together coordinate Fe cation.

It belongs to the ROX family. NO66 subfamily. It depends on Fe(2+) as a cofactor.

It is found in the nucleus. The catalysed reaction is N(6),N(6)-dimethyl-L-lysyl(36)-[histone H3] + 2 2-oxoglutarate + 2 O2 = L-lysyl(36)-[histone H3] + 2 formaldehyde + 2 succinate + 2 CO2. In terms of biological role, oxygenase that can act as both a histone lysine demethylase and a ribosomal histidine hydroxylase. Specifically demethylates 'Lys-4' (H3K4me) and 'Lys-36' (H3K36me) of histone H3, thereby playing a central role in histone code. The sequence is that of Bifunctional lysine-specific demethylase and histidyl-hydroxylase NO66 from Drosophila erecta (Fruit fly).